A 208-amino-acid chain; its full sequence is Ribosomal RNA small subunit methyltransferase G (208 aa).

Residues G75, L80, V126–E127, and R141 each bind S-adenosyl-L-methionine.

It belongs to the methyltransferase superfamily. RNA methyltransferase RsmG family.

Its subcellular location is the cytoplasm. The enzyme catalyses guanosine(527) in 16S rRNA + S-adenosyl-L-methionine = N(7)-methylguanosine(527) in 16S rRNA + S-adenosyl-L-homocysteine. In terms of biological role, specifically methylates the N7 position of guanine in position 527 of 16S rRNA. The chain is Ribosomal RNA small subunit methyltransferase G from Marinomonas sp. (strain MWYL1).